Consider the following 177-residue polypeptide: Large ribosomal subunit protein uL6 (177 aa).

This sequence belongs to the universal ribosomal protein uL6 family. As to quaternary structure, part of the 50S ribosomal subunit.

In terms of biological role, this protein binds to the 23S rRNA, and is important in its secondary structure. It is located near the subunit interface in the base of the L7/L12 stalk, and near the tRNA binding site of the peptidyltransferase center. In Psychrobacter arcticus (strain DSM 17307 / VKM B-2377 / 273-4), this protein is Large ribosomal subunit protein uL6.